Consider the following 468-residue polypeptide: Ribulose bisphosphate carboxylase large chain (468 aa).

Lys5 is modified (N6,N6,N6-trimethyllysine). Positions 114 and 164 each coordinate substrate. Lys166 (proton acceptor) is an active-site residue. Residue Lys168 coordinates substrate. 3 residues coordinate Mg(2+): Lys192, Asp194, and Glu195. Position 192 is an N6-carboxylysine (Lys192). His285 acts as the Proton acceptor in catalysis. Substrate contacts are provided by Arg286, His318, and Ser370.

The protein belongs to the RuBisCO large chain family. Type I subfamily. In terms of assembly, heterohexadecamer of 8 large chains and 8 small chains; disulfide-linked. The disulfide link is formed within the large subunit homodimers. It depends on Mg(2+) as a cofactor. Post-translationally, the disulfide bond which can form in the large chain dimeric partners within the hexadecamer appears to be associated with oxidative stress and protein turnover.

The protein localises to the plastid. Its subcellular location is the chloroplast. It carries out the reaction 2 (2R)-3-phosphoglycerate + 2 H(+) = D-ribulose 1,5-bisphosphate + CO2 + H2O. The catalysed reaction is D-ribulose 1,5-bisphosphate + O2 = 2-phosphoglycolate + (2R)-3-phosphoglycerate + 2 H(+). Its function is as follows. RuBisCO catalyzes two reactions: the carboxylation of D-ribulose 1,5-bisphosphate, the primary event in carbon dioxide fixation, as well as the oxidative fragmentation of the pentose substrate in the photorespiration process. Both reactions occur simultaneously and in competition at the same active site. The chain is Ribulose bisphosphate carboxylase large chain from Datura stramonium (Jimsonweed).